A 232-amino-acid chain; its full sequence is Phosphatidylserine decarboxylase proenzyme (232 aa).

S190 functions as the Schiff-base intermediate with substrate; via pyruvic acid in the catalytic mechanism. Position 190 is a pyruvic acid (Ser); by autocatalysis (S190).

The protein belongs to the phosphatidylserine decarboxylase family. PSD-A subfamily. In terms of assembly, heterodimer of a large membrane-associated beta subunit and a small pyruvoyl-containing alpha subunit. Requires pyruvate as cofactor. In terms of processing, is synthesized initially as an inactive proenzyme. Formation of the active enzyme involves a self-maturation process in which the active site pyruvoyl group is generated from an internal serine residue via an autocatalytic post-translational modification. Two non-identical subunits are generated from the proenzyme in this reaction, and the pyruvate is formed at the N-terminus of the alpha chain, which is derived from the carboxyl end of the proenzyme. The post-translation cleavage follows an unusual pathway, termed non-hydrolytic serinolysis, in which the side chain hydroxyl group of the serine supplies its oxygen atom to form the C-terminus of the beta chain, while the remainder of the serine residue undergoes an oxidative deamination to produce ammonia and the pyruvoyl prosthetic group on the alpha chain.

It is found in the cell membrane. The catalysed reaction is a 1,2-diacyl-sn-glycero-3-phospho-L-serine + H(+) = a 1,2-diacyl-sn-glycero-3-phosphoethanolamine + CO2. It functions in the pathway phospholipid metabolism; phosphatidylethanolamine biosynthesis; phosphatidylethanolamine from CDP-diacylglycerol: step 2/2. Catalyzes the formation of phosphatidylethanolamine (PtdEtn) from phosphatidylserine (PtdSer). Important for establishment of root nodule symbiosis with the host plant. The chain is Phosphatidylserine decarboxylase proenzyme from Rhizobium meliloti (strain 1021) (Ensifer meliloti).